The sequence spans 129 residues: ATP synthase epsilon chain (129 aa).

It belongs to the ATPase epsilon chain family. As to quaternary structure, F-type ATPases have 2 components, CF(1) - the catalytic core - and CF(0) - the membrane proton channel. CF(1) has five subunits: alpha(3), beta(3), gamma(1), delta(1), epsilon(1). CF(0) has three main subunits: a, b and c.

It localises to the cell inner membrane. Its function is as follows. Produces ATP from ADP in the presence of a proton gradient across the membrane. The chain is ATP synthase epsilon chain from Nitratiruptor sp. (strain SB155-2).